Here is a 395-residue protein sequence, read N- to C-terminus: Lipid-A-disaccharide synthase (395 aa).

The protein belongs to the LpxB family.

It catalyses the reaction a lipid X + a UDP-2-N,3-O-bis[(3R)-3-hydroxyacyl]-alpha-D-glucosamine = a lipid A disaccharide + UDP + H(+). It functions in the pathway bacterial outer membrane biogenesis; LPS lipid A biosynthesis. Functionally, condensation of UDP-2,3-diacylglucosamine and 2,3-diacylglucosamine-1-phosphate to form lipid A disaccharide, a precursor of lipid A, a phosphorylated glycolipid that anchors the lipopolysaccharide to the outer membrane of the cell. The protein is Lipid-A-disaccharide synthase of Bordetella avium (strain 197N).